Here is a 398-residue protein sequence, read N- to C-terminus: Enoyl-[acyl-carrier-protein] reductase [NADH] (398 aa).

Residues 48 to 53, 74 to 75, 111 to 112, and 139 to 140 contribute to the NAD(+) site; these read GSSTGY, FE, DA, and LA. Tyr225 provides a ligand contact to substrate. Tyr235 serves as the catalytic Proton donor. Residues Lys244 and 273–275 contribute to the NAD(+) site; that span reads VVT.

It belongs to the TER reductase family. Monomer.

The catalysed reaction is a 2,3-saturated acyl-[ACP] + NAD(+) = a (2E)-enoyl-[ACP] + NADH + H(+). The protein operates within lipid metabolism; fatty acid biosynthesis. Involved in the final reduction of the elongation cycle of fatty acid synthesis (FAS II). Catalyzes the reduction of a carbon-carbon double bond in an enoyl moiety that is covalently linked to an acyl carrier protein (ACP). The sequence is that of Enoyl-[acyl-carrier-protein] reductase [NADH] from Pseudomonas aeruginosa (strain UCBPP-PA14).